The chain runs to 232 residues: Histone H1.X (232 aa).

The H15 domain maps to 36-112; sequence HHPSYMDMIK…GATGSFRMGK (77 aa). A disordered region spans residues 142–232; it reads ISKAEKTKPS…LRTGTRKSYC (91 aa). The span at 159 to 197 shows a compositional bias: basic residues; the sequence is KKGKPISTMKKRGVMSKKRSSKNKMAPKAKSHGLKKKGP.

This sequence belongs to the histone H1/H5 family.

Its subcellular location is the nucleus. It localises to the chromosome. The chain is Histone H1.X (hil-1) from Caenorhabditis elegans.